A 221-amino-acid polypeptide reads, in one-letter code: Adenylate kinase (221 aa).

10 to 15 is an ATP binding site; the sequence is GAGKGT. The interval 30-59 is NMP; the sequence is STGDMLRAAVKAGTPLGVEAKKVMDAGGLV. Residues threonine 31, arginine 36, 57–59, 85–88, and glutamine 92 each bind AMP; these read GLV and GFPR. Residues 122 to 159 form an LID region; it reads GRRVHVASGRTYHVKYNPPKTEGVDDETGEALIQRDDD. ATP is bound by residues arginine 123 and 132–133; that span reads TY. Residues arginine 156 and arginine 167 each contribute to the AMP site. An ATP-binding site is contributed by glycine 207.

It belongs to the adenylate kinase family. Monomer.

The protein resides in the cytoplasm. It carries out the reaction AMP + ATP = 2 ADP. The protein operates within purine metabolism; AMP biosynthesis via salvage pathway; AMP from ADP: step 1/1. Functionally, catalyzes the reversible transfer of the terminal phosphate group between ATP and AMP. Plays an important role in cellular energy homeostasis and in adenine nucleotide metabolism. The chain is Adenylate kinase from Cupriavidus necator (strain ATCC 17699 / DSM 428 / KCTC 22496 / NCIMB 10442 / H16 / Stanier 337) (Ralstonia eutropha).